The following is a 463-amino-acid chain: Glutamate--tRNA ligase 1 (463 aa).

The 'HIGH' region motif lies at 11-21; it reads PSPTGYLHIGG. Positions 240-244 match the 'KMSKS' region motif; that stretch reads KLSKR. Lys243 is an ATP binding site.

It belongs to the class-I aminoacyl-tRNA synthetase family. Glutamate--tRNA ligase type 1 subfamily. In terms of assembly, monomer.

It localises to the cytoplasm. The catalysed reaction is tRNA(Glu) + L-glutamate + ATP = L-glutamyl-tRNA(Glu) + AMP + diphosphate. Its function is as follows. Catalyzes the attachment of glutamate to tRNA(Glu) in a two-step reaction: glutamate is first activated by ATP to form Glu-AMP and then transferred to the acceptor end of tRNA(Glu). The polypeptide is Glutamate--tRNA ligase 1 (Campylobacter jejuni subsp. doylei (strain ATCC BAA-1458 / RM4099 / 269.97)).